Here is a 339-residue protein sequence, read N- to C-terminus: DNA-directed RNA polymerase subunit alpha (339 aa).

Positions 1-233 (MVREEVAGST…DLFLPFLHAE (233 aa)) are alpha N-terminal domain (alpha-NTD). The segment at 264-339 (KKGIPLNCIF…IDLLKNKLSF (76 aa)) is alpha C-terminal domain (alpha-CTD).

It belongs to the RNA polymerase alpha chain family. In plastids the minimal PEP RNA polymerase catalytic core is composed of four subunits: alpha, beta, beta', and beta''. When a (nuclear-encoded) sigma factor is associated with the core the holoenzyme is formed, which can initiate transcription.

It is found in the plastid. The protein resides in the chloroplast. The catalysed reaction is RNA(n) + a ribonucleoside 5'-triphosphate = RNA(n+1) + diphosphate. Functionally, DNA-dependent RNA polymerase catalyzes the transcription of DNA into RNA using the four ribonucleoside triphosphates as substrates. The sequence is that of DNA-directed RNA polymerase subunit alpha from Bromus inermis (Smooth brome grass).